The primary structure comprises 396 residues: Enoyl-[acyl-carrier-protein] reductase [NADH] (396 aa).

Residues 47–52 (GASTGF), 73–74 (FE), 110–111 (DA), and 138–139 (LA) contribute to the NAD(+) site. Position 224 (Tyr224) interacts with substrate. The active-site Proton donor is Tyr234. Residues Lys243 and 272–274 (LVT) contribute to the NAD(+) site.

This sequence belongs to the TER reductase family. In terms of assembly, monomer.

The catalysed reaction is a 2,3-saturated acyl-[ACP] + NAD(+) = a (2E)-enoyl-[ACP] + NADH + H(+). It functions in the pathway lipid metabolism; fatty acid biosynthesis. Functionally, involved in the final reduction of the elongation cycle of fatty acid synthesis (FAS II). Catalyzes the reduction of a carbon-carbon double bond in an enoyl moiety that is covalently linked to an acyl carrier protein (ACP). The sequence is that of Enoyl-[acyl-carrier-protein] reductase [NADH] from Cytophaga hutchinsonii (strain ATCC 33406 / DSM 1761 / CIP 103989 / NBRC 15051 / NCIMB 9469 / D465).